The sequence spans 139 residues: uncharacterized protein (139 aa).

This sequence to S.typhimurium FliF.

May be involved in the assembly, structure, or function of the flagellum. May polymerize to form a filamentous structure that is part of the flagellum. This is an uncharacterized protein from Bacillus subtilis (strain 168).